The chain runs to 89 residues: LTSVFGGAAEPPRGGNPDSNTLISDTTTVICLDDYHSLDRGVTALDPRANDFDLMYEQVKKPDFDAYIDPQKLDELIYVESHLSNLSTK.

A disordered region spans residues 1 to 22 (LTSVFGGAAEPPRGGNPDSNTL).

This sequence belongs to the phosphoribulokinase family.

It is found in the plastid. The protein resides in the chloroplast. The enzyme catalyses D-ribulose 5-phosphate + ATP = D-ribulose 1,5-bisphosphate + ADP + H(+). It participates in carbohydrate biosynthesis; Calvin cycle. With respect to regulation, light regulated via thioredoxin by reversible oxidation/reduction of sulfhydryl/disulfide groups. This Vitis sp. (Grape) protein is Phosphoribulokinase, chloroplastic.